The chain runs to 200 residues: Transcriptional repressor NrdR (200 aa).

A zinc finger spans residues 3–34; the sequence is CPFCQNPDTKVIDTRISDDGHSIRRRRECPNC. An ATP-cone domain is found at 46 to 136; that stretch reads LLVKKRSGNV…VYQNFEDLED (91 aa).

The protein belongs to the NrdR family. The cofactor is Zn(2+).

Negatively regulates transcription of bacterial ribonucleotide reductase nrd genes and operons by binding to NrdR-boxes. The sequence is that of Transcriptional repressor NrdR from Bifidobacterium animalis subsp. lactis (strain AD011).